Here is a 189-residue protein sequence, read N- to C-terminus: Nucleoside diphosphate kinase 6 (189 aa).

6 residues coordinate ATP: K19, F68, R96, T102, R116, and N126. H129 serves as the catalytic Pros-phosphohistidine intermediate.

Belongs to the NDK family. Mg(2+) is required as a cofactor.

It catalyses the reaction a 2'-deoxyribonucleoside 5'-diphosphate + ATP = a 2'-deoxyribonucleoside 5'-triphosphate + ADP. The enzyme catalyses a ribonucleoside 5'-diphosphate + ATP = a ribonucleoside 5'-triphosphate + ADP. In terms of biological role, major role in the synthesis of nucleoside triphosphates other than ATP. The ATP gamma phosphate is transferred to the NDP beta phosphate via a ping-pong mechanism, using a phosphorylated active-site intermediate. The protein is Nucleoside diphosphate kinase 6 (Nme6) of Mus musculus (Mouse).